The sequence spans 572 residues: Urease subunit alpha (572 aa).

A Urease domain is found at 134–572 (AGIDSHIHLI…ASMNQRYFFG (439 aa)). Residues His139, His141, and Lys222 each coordinate Ni(2+). Lys222 bears the N6-carboxylysine mark. His224 provides a ligand contact to substrate. His251 and His277 together coordinate Ni(2+). The Proton donor role is filled by His325. Asp365 lines the Ni(2+) pocket.

It belongs to the metallo-dependent hydrolases superfamily. Urease alpha subunit family. As to quaternary structure, heterotrimer of UreA (gamma), UreB (beta) and UreC (alpha) subunits. Three heterotrimers associate to form the active enzyme. Requires Ni cation as cofactor. Post-translationally, carboxylation allows a single lysine to coordinate two nickel ions.

Its subcellular location is the cytoplasm. It carries out the reaction urea + 2 H2O + H(+) = hydrogencarbonate + 2 NH4(+). It functions in the pathway nitrogen metabolism; urea degradation; CO(2) and NH(3) from urea (urease route): step 1/1. In Yersinia pseudotuberculosis serotype O:1b (strain IP 31758), this protein is Urease subunit alpha.